A 692-amino-acid chain; its full sequence is MARTNPLEKVRNIGIAAHIDAGKTTTTERILFYSGIIHKIGEVHEGTAVTDWMDQERERGITITAAAISTSWKDYQINIIDTPGHVDFTIEVERSMRVLDGVIAVFCSVGGVQPQSETVWRQADRYKVPRIAFINKMDRTGANFYRVHEQMRDRLRANAIAIQLPIGSENDFKGIVDLVRKRAYIYNNDQGTDIQETDIPADLQNQVEEYYTKLVEAVAETDDALMTKYFDGEALTEEEIRSALRQGTIAGTIVPVLCGSAFKNKGVQLMLDAVVDYLPAPTEVPPIQGTLANGDTVERRADDNEPLAALAFKIMADPYGRLTFVRVYSGVLKKGSYVLNATKNKKERISRLVLMKADDRQDVEELRAGDLGAALGLKDTLTGDTITDEGSPVILESLFIPEPVISVAVEPKTKNDMDKLSKALQSLSEEDPTFRVNVDPETNQTVIAGMGELHLEILVDRMLREFKVEANVGAPQVAYRETIRKSVTNVEGKFIRQSGGKGQYGHVVINLEPGEPGTGFEFVSKIVGGVVPKEYIGPAEQGMKESCESGILAGYPLIDVKATLVHGSYHDVDSSEMAFKIAGSMALKEAVLKASPVLLEPMMKVEVEVPEDYIGNVIGDLISRRGQIESQSTEQGLAKVASKVPLATMFGYATDIRSKTQGRGIFTMEFSHYEEVPRSVAETIIAKSKGNA.

The tr-type G domain maps to 8–282 (EKVRNIGIAA…AVVDYLPAPT (275 aa)). Residues 17–24 (AHIDAGKT), 81–85 (DTPGH), and 135–138 (NKMD) contribute to the GTP site.

Belongs to the TRAFAC class translation factor GTPase superfamily. Classic translation factor GTPase family. EF-G/EF-2 subfamily.

The protein resides in the cytoplasm. Its function is as follows. Catalyzes the GTP-dependent ribosomal translocation step during translation elongation. During this step, the ribosome changes from the pre-translocational (PRE) to the post-translocational (POST) state as the newly formed A-site-bound peptidyl-tRNA and P-site-bound deacylated tRNA move to the P and E sites, respectively. Catalyzes the coordinated movement of the two tRNA molecules, the mRNA and conformational changes in the ribosome. The chain is Elongation factor G from Trichormus variabilis (strain ATCC 29413 / PCC 7937) (Anabaena variabilis).